A 213-amino-acid chain; its full sequence is MRVKHKKWADPLIAAHPELMIDDATQFKGKWQSRFAKEQPLHLEVGMGKGQFIIGMAKDHPEINFIGLEIQRTVAAIALKKALEEDLPNLQLICGDGEDLQEYFEDGEVAKMYLNFSDPWPKKRHAKRRLTYKTFLATYQQILQDQGAIELKTDNMGLFEFSLESMNNYGMIFDGVWLDLHHSEENEHNVETEYEQKFAAKGQPIYKLIANFK.

Glutamate 44, glutamate 69, aspartate 96, and aspartate 118 together coordinate S-adenosyl-L-methionine. The active site involves aspartate 118. Substrate is bound by residues lysine 122, aspartate 154, and 192 to 195 (TEYE).

This sequence belongs to the class I-like SAM-binding methyltransferase superfamily. TrmB family.

It carries out the reaction guanosine(46) in tRNA + S-adenosyl-L-methionine = N(7)-methylguanosine(46) in tRNA + S-adenosyl-L-homocysteine. It functions in the pathway tRNA modification; N(7)-methylguanine-tRNA biosynthesis. Catalyzes the formation of N(7)-methylguanine at position 46 (m7G46) in tRNA. In Limosilactobacillus reuteri (strain DSM 20016) (Lactobacillus reuteri), this protein is tRNA (guanine-N(7)-)-methyltransferase.